Reading from the N-terminus, the 125-residue chain is Large ribosomal subunit protein eL8 (125 aa).

It belongs to the eukaryotic ribosomal protein eL8 family. In terms of assembly, part of the 50S ribosomal subunit. Probably part of the RNase P complex.

Its subcellular location is the cytoplasm. In terms of biological role, multifunctional RNA-binding protein that recognizes the K-turn motif in ribosomal RNA, the RNA component of RNase P, box H/ACA, box C/D and box C'/D' sRNAs. This chain is Large ribosomal subunit protein eL8, found in Metallosphaera sedula (strain ATCC 51363 / DSM 5348 / JCM 9185 / NBRC 15509 / TH2).